Reading from the N-terminus, the 279-residue chain is HTH-type transcriptional regulator HdfR (279 aa).

Positions 1–58 (MDTELLKTFLEVSRTRHFGRAAESLYLTQSAVSFRIRQLENQLGVNLFTRHRNNIRLT) constitute an HTH lysR-type domain. A DNA-binding region (H-T-H motif) is located at residues 18–37 (FGRAAESLYLTQSAVSFRIR).

The protein belongs to the LysR transcriptional regulatory family.

Functionally, negatively regulates the transcription of the flagellar master operon flhDC by binding to the upstream region of the operon. The protein is HTH-type transcriptional regulator HdfR of Escherichia coli O6:K15:H31 (strain 536 / UPEC).